The following is a 680-amino-acid chain: GTPase Obg (680 aa).

An Obg domain is found at 2-160 (DQFIDVVSFE…LNIRLEVKLI (159 aa)). The OBG-type G domain occupies 161 to 336 (ADIGLVGMPN…LDGDMLDKVT (176 aa)). Residues 167 to 174 (GMPNTGKS), 192 to 196 (FTTLT), 214 to 217 (DIPG), 281 to 284 (NKTD), and 317 to 319 (PEI) each bind GTP. S174 and T194 together coordinate Mg(2+). The segment at 371–680 (TKRVFGPVVS…NGVLSYAVNI (310 aa)) is radical SAM domain. The region spanning 383–613 (LGNSLGIDVI…IEIDVPSVSD (231 aa)) is the Radical SAM core domain. [4Fe-4S] cluster is bound by residues C397, C401, and C404.

This sequence belongs to the TRAFAC class OBG-HflX-like GTPase superfamily. OBG GTPase family. In terms of assembly, monomer. The cofactor is Mg(2+). Requires [4Fe-4S] cluster as cofactor.

The protein resides in the cytoplasm. Its function is as follows. An essential GTPase which binds GTP, GDP and possibly (p)ppGpp with moderate affinity, with high nucleotide exchange rates and a fairly low GTP hydrolysis rate. Plays a role in control of the cell cycle, stress response, ribosome biogenesis and in those bacteria that undergo differentiation, in morphogenesis control. This chain is GTPase Obg, found in Brachyspira hyodysenteriae (strain ATCC 49526 / WA1).